Here is a 104-residue protein sequence, read N- to C-terminus: Flagellar hook-basal body complex protein FliE (104 aa).

This sequence belongs to the FliE family.

The protein localises to the bacterial flagellum basal body. In Pectobacterium carotovorum subsp. carotovorum (strain PC1), this protein is Flagellar hook-basal body complex protein FliE.